Consider the following 982-residue polypeptide: Glycine dehydrogenase (decarboxylating) (982 aa).

Residue K721 is modified to N6-(pyridoxal phosphate)lysine.

Belongs to the GcvP family. In terms of assembly, the glycine cleavage system is composed of four proteins: P, T, L and H. It depends on pyridoxal 5'-phosphate as a cofactor.

It carries out the reaction N(6)-[(R)-lipoyl]-L-lysyl-[glycine-cleavage complex H protein] + glycine + H(+) = N(6)-[(R)-S(8)-aminomethyldihydrolipoyl]-L-lysyl-[glycine-cleavage complex H protein] + CO2. Its function is as follows. The glycine cleavage system catalyzes the degradation of glycine. The P protein binds the alpha-amino group of glycine through its pyridoxal phosphate cofactor; CO(2) is released and the remaining methylamine moiety is then transferred to the lipoamide cofactor of the H protein. The polypeptide is Glycine dehydrogenase (decarboxylating) (Prochlorococcus marinus (strain MIT 9303)).